A 259-amino-acid chain; its full sequence is NAD kinase (259 aa).

Asp-43 functions as the Proton acceptor in the catalytic mechanism. NAD(+)-binding positions include 43-44 (DG), 111-112 (NE), and Arg-136.

This sequence belongs to the NAD kinase family. It depends on a divalent metal cation as a cofactor.

The protein resides in the cytoplasm. The catalysed reaction is NAD(+) + ATP = ADP + NADP(+) + H(+). Involved in the regulation of the intracellular balance of NAD and NADP, and is a key enzyme in the biosynthesis of NADP. Catalyzes specifically the phosphorylation on 2'-hydroxyl of the adenosine moiety of NAD to yield NADP. In Mycoplasma genitalium (strain ATCC 33530 / DSM 19775 / NCTC 10195 / G37) (Mycoplasmoides genitalium), this protein is NAD kinase.